A 176-amino-acid polypeptide reads, in one-letter code: NAD(P)H-quinone oxidoreductase subunit I, chloroplastic (176 aa).

2 4Fe-4S ferredoxin-type domains span residues 55 to 84 and 95 to 124; these read GRIH…VDWE and LNYS…MTEE. The [4Fe-4S] cluster site is built by Cys64, Cys67, Cys70, Cys74, Cys104, Cys107, Cys110, and Cys114.

This sequence belongs to the complex I 23 kDa subunit family. In terms of assembly, NDH is composed of at least 16 different subunits, 5 of which are encoded in the nucleus. Requires [4Fe-4S] cluster as cofactor.

It localises to the plastid. The protein resides in the chloroplast thylakoid membrane. It catalyses the reaction a plastoquinone + NADH + (n+1) H(+)(in) = a plastoquinol + NAD(+) + n H(+)(out). It carries out the reaction a plastoquinone + NADPH + (n+1) H(+)(in) = a plastoquinol + NADP(+) + n H(+)(out). In terms of biological role, NDH shuttles electrons from NAD(P)H:plastoquinone, via FMN and iron-sulfur (Fe-S) centers, to quinones in the photosynthetic chain and possibly in a chloroplast respiratory chain. The immediate electron acceptor for the enzyme in this species is believed to be plastoquinone. Couples the redox reaction to proton translocation, and thus conserves the redox energy in a proton gradient. This Populus trichocarpa (Western balsam poplar) protein is NAD(P)H-quinone oxidoreductase subunit I, chloroplastic.